The chain runs to 680 residues: tRNA 5-methylaminomethyl-2-thiouridine biosynthesis bifunctional protein MnmC (680 aa).

Residues 1-245 (MSHPPIQTAT…KREMLTGILP (245 aa)) are tRNA (mnm(5)s(2)U34)-methyltransferase. Residues 270–680 (IGGGIVSALT…PVQQRVSVLS (411 aa)) are FAD-dependent cmnm(5)s(2)U34 oxidoreductase.

It in the N-terminal section; belongs to the methyltransferase superfamily. tRNA (mnm(5)s(2)U34)-methyltransferase family. The protein in the C-terminal section; belongs to the DAO family. FAD serves as cofactor.

Its subcellular location is the cytoplasm. The enzyme catalyses 5-aminomethyl-2-thiouridine(34) in tRNA + S-adenosyl-L-methionine = 5-methylaminomethyl-2-thiouridine(34) in tRNA + S-adenosyl-L-homocysteine + H(+). Its function is as follows. Catalyzes the last two steps in the biosynthesis of 5-methylaminomethyl-2-thiouridine (mnm(5)s(2)U) at the wobble position (U34) in tRNA. Catalyzes the FAD-dependent demodification of cmnm(5)s(2)U34 to nm(5)s(2)U34, followed by the transfer of a methyl group from S-adenosyl-L-methionine to nm(5)s(2)U34, to form mnm(5)s(2)U34. This is tRNA 5-methylaminomethyl-2-thiouridine biosynthesis bifunctional protein MnmC from Yersinia enterocolitica serotype O:8 / biotype 1B (strain NCTC 13174 / 8081).